We begin with the raw amino-acid sequence, 90 residues long: Small ribosomal subunit protein uS15c (90 aa).

Belongs to the universal ribosomal protein uS15 family. As to quaternary structure, part of the 30S ribosomal subunit.

The protein localises to the plastid. Its subcellular location is the chloroplast. In Daucus carota (Wild carrot), this protein is Small ribosomal subunit protein uS15c (rps15).